Here is a 463-residue protein sequence, read N- to C-terminus: Vacuolar cation/proton exchanger 1 (463 aa).

A2 carries the post-translational modification N-acetylalanine. Topologically, residues A2–E68 are cytoplasmic. A required for autoinhibitory regulation region spans residues S25–T33. The segment at Y56–F62 is required for interaction with autoinhibitory region. Residues V69 to T89 form a helical membrane-spanning segment. Residues I87–Q95 form a required for Ca(2+)/H(+) exchange activity region. The Extracellular segment spans residues Y90–P96. A helical membrane pass occupies residues W97 to L116. At T117 to T127 the chain is on the cytoplasmic side. The chain crosses the membrane as a helical span at residues L128 to A148. Residues G137–V172 are cation selection. The Extracellular segment spans residues L149–L161. Residues L162–I182 form a helical membrane-spanning segment. Residues A183–D197 lie on the Cytoplasmic side of the membrane. Residues V198–Y218 traverse the membrane as a helical segment. Residues L219 to R238 lie on the Extracellular side of the membrane. A helical transmembrane segment spans residues G239–H259. Residues R260–A281 lie on the Cytoplasmic side of the membrane. The helical transmembrane segment at V282–L302 threads the bilayer. Residues S303–S325 are Extracellular-facing. N318 is a glycosylation site (N-linked (GlcNAc...) asparagine). The chain crosses the membrane as a helical span at residues I326–F346. The cation selection stretch occupies residues G333 to V368. At K347 to S360 the chain is on the cytoplasmic side. The helical transmembrane segment at A361 to I381 threads the bilayer. At N382–D384 the chain is on the extracellular side. A helical membrane pass occupies residues L385–T405. Residues L406–S411 lie on the Cytoplasmic side of the membrane. A helical transmembrane segment spans residues H412 to V432. The Extracellular segment spans residues D433–S463.

This sequence belongs to the Ca(2+):cation antiporter (CaCA) (TC 2.A.19) family. Cation/proton exchanger (CAX) subfamily. Interacts with GRXS14 and CXIP4. In terms of tissue distribution, expressed at low levels in leaves, stems and flowers.

The protein resides in the vacuole membrane. Its activity is regulated as follows. Activated by monothiol glutaredoxin GRXS14 and CXIP4. Inhibited by excess of Ca(2+) and Cd(2+), Na(+) and K(+), but not Mn(2+). Its function is as follows. Vacuolar cation/proton exchanger (CAX). Translocates Ca(2+) and other metal ions into vacuoles using the proton gradient formed by H(+)-ATPase and H(+)-pyrophosphatase. Involved in ion homeostasis in association with CAX3. May play a role in cold-acclimation response. The sequence is that of Vacuolar cation/proton exchanger 1 (CAX1) from Arabidopsis thaliana (Mouse-ear cress).